Reading from the N-terminus, the 181-residue chain is Squamosa promoter-binding-like protein 5 (181 aa).

Positions 1–10 (MEGQRTQRRG) are enriched in basic residues. A disordered region spans residues 1–58 (MEGQRTQRRGYLKDKATVSNLVEEEMENGMDGEEEDGGDEDKRKKVMERVRGPSTDRV). The span at 22–39 (VEEEMENGMDGEEEDGGD) shows a compositional bias: acidic residues. A compositionally biased stretch (basic and acidic residues) spans 40 to 51 (EDKRKKVMERVR). Residues 60–137 (SRLCQVDRCT…AGHNERRRKI (78 aa)) form an SBP-type zinc finger. Positions 63, 68, 85, 88, 104, 107, 111, and 123 each coordinate Zn(2+). The short motif at 120-136 (KRSCRRRLAGHNERRRK) is the Bipartite nuclear localization signal element. The tract at residues 128-181 (AGHNERRRKISGDSFGEGSGRRGFSGQLIQTQERNRVDRKLPMTNSSFKRPQIR) is disordered. Polar residues predominate over residues 170-181 (MTNSSFKRPQIR).

Zn(2+) is required as a cofactor. Expressed in the inflorescence apical meristem and young flowers.

It localises to the nucleus. The protein localises to the cytoplasm. Trans-acting factor that binds specifically to the consensus nucleotide sequence 5'-TNCGTACAA-3' of AP1 promoter. Promotes both vegetative phase change and flowering. In Arabidopsis thaliana (Mouse-ear cress), this protein is Squamosa promoter-binding-like protein 5 (SPL5).